The following is a 413-amino-acid chain: MNFKEKDPALWGAIADEEQRQEETIELIASENIVSHAVRTAQGSVLTNKYAEGYPGKRYYGGTQYIDVVEQLAIDRAKKLFGAEYANVQPHSGSQANQAVYAAFLKPGDTILGMGLDAGGHLTHGAKVNFSGKLYNSYSYALNPETELLDYDMIRDLARKVKPQLIVAGASAYSRTIDWQAFRSIADEVGAYLMVDMAHIAGLVATGLHPSPVGIADVVTTTTHKTLRGPRGGLILSQAENAKKINSAVFPGTQGGPLEHVIAGKAAAFFEDSQPAFKEYAQQIITNAQAMADEFSQLPTVRVVSGGTDNHLMTLDLSQTALNGKQAQELLDSVLITTNKEAIPNETLSPFKTSGIRLGTPAITTRGFNADESREVARLIVKTLLNPEDEAVLTGVRQRVKELTSAHPLSQLD.

Residues Leu116 and 120–122 each bind (6S)-5,6,7,8-tetrahydrofolate; that span reads GHL. At Lys225 the chain carries N6-(pyridoxal phosphate)lysine. Position 349 to 351 (349 to 351) interacts with (6S)-5,6,7,8-tetrahydrofolate; it reads SPF.

The protein belongs to the SHMT family. In terms of assembly, homodimer. Pyridoxal 5'-phosphate is required as a cofactor.

It localises to the cytoplasm. It carries out the reaction (6R)-5,10-methylene-5,6,7,8-tetrahydrofolate + glycine + H2O = (6S)-5,6,7,8-tetrahydrofolate + L-serine. The protein operates within one-carbon metabolism; tetrahydrofolate interconversion. It participates in amino-acid biosynthesis; glycine biosynthesis; glycine from L-serine: step 1/1. Catalyzes the reversible interconversion of serine and glycine with tetrahydrofolate (THF) serving as the one-carbon carrier. This reaction serves as the major source of one-carbon groups required for the biosynthesis of purines, thymidylate, methionine, and other important biomolecules. Also exhibits THF-independent aldolase activity toward beta-hydroxyamino acids, producing glycine and aldehydes, via a retro-aldol mechanism. The protein is Serine hydroxymethyltransferase of Levilactobacillus brevis (strain ATCC 367 / BCRC 12310 / CIP 105137 / JCM 1170 / LMG 11437 / NCIMB 947 / NCTC 947) (Lactobacillus brevis).